We begin with the raw amino-acid sequence, 542 residues long: Cytochrome P450 monooxygenase sdnH (542 aa).

The helical transmembrane segment at 25 to 45 (LYVAGGILGAFTVYSIILVVY) threads the bilayer. Positions 141–160 (IIPPRGLGQEDSIGSTRSHD) are disordered. A helical membrane pass occupies residues 340–360 (FMGAGTYPTAATLIFVAYYIL). Cysteine 483 is a heme binding site. Asparagine 506 carries N-linked (GlcNAc...) asparagine glycosylation.

The protein belongs to the cytochrome P450 family. It depends on heme as a cofactor.

The protein localises to the membrane. It functions in the pathway antibiotic biosynthesis. Cytochrome P450 monooxygenase; part of the gene cluster that mediates the biosynthesis of sordarin and hypoxysordarin, glycoside antibiotics with a unique tetracyclic diterpene aglycone structure. First, the geranylgeranyl diphosphate synthase sdnC constructs GGDP from farnesyl diphosphate and isopentenyl diphosphate. The diterpene cyclase sdnA then catalyzes the cyclization of GGDP to afford cycloaraneosene. Cycloaraneosene is then hydroxylated four times by the putative cytochrome P450 monooxygenases sdnB, sdnE, sdnF and sdnH to give a hydroxylated cycloaraneosene derivative such as cycloaraneosene-8,9,13,19-tetraol. Although the order of the hydroxylations is unclear, at least C8, C9 and C13 of the cycloaraneosene skeleton are hydroxylated before the sordaricin formation. Dehydration of the 13-hydroxy group of the hydroxylated cycloaraneosene derivative might be catalyzed by an unassigned hypothetical protein such as sdnG and sdnP to construct the cyclopentadiene moiety. The FAD-dependent oxidoreductase sdnN is proposed to catalyze the oxidation at C9 of the hydroxylated cycloaraneosene derivative and also catalyze the Baeyer-Villiger oxidation to give the lactone intermediate. The presumed lactone intermediate would be hydrolyzed to give an acrolein moiety and a carboxylate moiety. Then, [4+2]cycloaddition would occur between the acrolein moiety and the cyclopentadiene moiety to give sordaricin. SdnN might also be involved in the [4+2]cycloaddition after the hypothesized oxidation to accommodate the oxidized product and prompt the [4+2]cycloaddition. GDP-6-deoxy-D-altrose may be biosynthesized from GDP-D-mannose by the putative GDP-mannose-4,6-dehydratase sdnI and the short-chain dehydrogenase sdnK. The glycosyltransferase sdnJ catalyzes the attachment of 6-deoxy-D-altrose onto the 19-hydroxy group of sordaricin to give 4'-O-demethylsordarin. The methyltransferase sdnD would complete the biosynthesis of sordarin. Sordarin can be further modified into hypoxysordarin. The unique acyl chain at the 3'-hydroxy group of hypoxysordarin would be constructed by an iterative type I PKS sdnO and the trans-acting polyketide methyltransferase sdnL. SdnL would be responsible for the introduction of an alpha-methyl group of the polyketide chain. Alternatively, the beta-lactamase-like protein sdnR might be responsible for the cleavage and transfer of the polyketide chain from the PKS sdnO to sordarin. Two putative cytochrome P450 monooxygenases, sdnQ and sdnT, might catalyze the epoxidations of the polyketide chain to complete the biosynthesis of hypoxysordarin. Transcriptional regulators sdnM and sdnS are presumably encoded for the transcriptional regulation of the expression of the sdn gene cluster. The sequence is that of Cytochrome P450 monooxygenase sdnH from Sordaria araneosa (Pleurage araneosa).